Reading from the N-terminus, the 644-residue chain is (E2-independent) E3 ubiquitin-conjugating enzyme FATS (644 aa).

The segment at 1-67 (MISPVVISRL…LGILTPSDDQ (67 aa)) is required for interaction with p53/TP53. Disordered regions lie at residues 62–83 (TPSDDQGLETEPLSTGDNLGKG), 305–349 (LGSG…SSHT), 367–413 (VLSG…SILS), and 475–507 (NEDPTVTPEPSPATPSPSTPEGAQSSDPSEDSY). The segment at 67-175 (QGLETEPLST…RLSARQDYWV (109 aa)) is required for interaction with HDAC1. Residues 398-410 (EGDSSPSSDGQPS) are compositionally biased toward low complexity. Pro residues predominate over residues 481–492 (TPEPSPATPSPS). Residues 516–644 (TLQEALEVHR…LDQLLQRNAV (129 aa)) are ALMS motif. Residues 598-629 (KRIYNNLPEVKKKKEEQKKRMILQSNRLRAEV) adopt a coiled-coil conformation.

Interacts with HDAC1; the interaction prevents binding of HDAC1 to CDKN1A/p21 and facilitates the acetylation and stabilization of CDKN1A/p21. Interacts with p53/TP53; the interaction inhibits binding of p53/TP53 and MDM2. Highly expressed in testis. Weak expression found in brain, lung, heart, ovary, thymus, spleen and kidney.

The protein localises to the cytoplasm. It localises to the cytoskeleton. Its subcellular location is the microtubule organizing center. The protein resides in the centrosome. Its function is as follows. Tumor suppressor that is required to sustain G2/M checkpoint after DNA damage. Acts as a p53/TP53 activator by inhibiting MDM2 binding to p53/TP53 and stimulating non-proteolytic polyubiquitination of p53/TP53. Exhibits ubiquitin ligase (E3) activity and assemble ubiquitin polymers through 'Lys-11'- (K11-), 'Lys-29'- (K29-) and 'Lys-63'- (K63)-linkages, independently of the ubiquitin-conjugating enzyme (E2). Promotes p53/TP53-dependent transcription of CDKN1A/p21, leading to robust checkpoint response. Mediates CDKN1A/p21 protein stability in a ubiquitin-independent manner. Interacts with HDAC1 and prevents binding of HDAC1 to CDKN1A/p21 and facilitates the acetylation and stabilization of CDKN1A/p21. May have a role in the assembly of primary cilia. The chain is (E2-independent) E3 ubiquitin-conjugating enzyme FATS from Mus musculus (Mouse).